A 79-amino-acid chain; its full sequence is Conotoxin MIVA (79 aa).

Residues 1–21 form the signal peptide; the sequence is MGMRMMFTVFLLVVLATTVVS. A propeptide spanning residues 22–38 is cleaved from the precursor; it reads IPSDRASDGRNAVVHER. Residue Pro-40 is modified to 4-hydroxyproline. Residue Glu-41 is modified to 4-carboxyglutamate. O-linked (HexNAc...) threonine glycosylation is found at Thr-45 and Thr-47. 4-hydroxyproline occurs at positions 55, 60, 61, 69, 70, and 74. Position 74 is a proline amide (Pro-74). A propeptide spanning residues 75–79 is cleaved from the precursor; that stretch reads GRRND.

Post-translationally, O-linked glycan consists of Hex4-HexNAc2 hexasaccharide. Contains 3 disulfide bonds. As to expression, expressed by the venom duct.

It is found in the secreted. Its function is as follows. Probable neurotoxin with ion channel inhibitor activity. The polypeptide is Conotoxin MIVA (Conus magus (Magical cone)).